Consider the following 275-residue polypeptide: MQYQNPNTLQAVILDWAGTVVDFGSFAPTQIFVEAFAEFDVQVSIEEARGPMGMGKWDHIRTLCDQPQVAERYRKAFGRTPTDDDVTAIYQRFMPLQIEKIAEHSALIPGALDTIARLRVQGIKVGSCSGYPKQVMDKVVALAATNGYIADHVVATDEVPNGRPWPAQALANVIALGIDDVAACVKVDDTVPGILEGRRAGMWTVALTCSGNALGLTYEQFRALDAATLASERKRIEAMFEGSRPHYLIDTITDLPAVISDINARLARGEMPQSN.

D15 (nucleophile) is an active-site residue. Residues D15 and A17 each coordinate Mg(2+). K56 functions as the Schiff-base intermediate with substrate in the catalytic mechanism. D189 serves as a coordination point for Mg(2+).

This sequence belongs to the HAD-like hydrolase superfamily. PhnX family. In terms of assembly, homodimer. Mg(2+) is required as a cofactor.

The enzyme catalyses phosphonoacetaldehyde + H2O = acetaldehyde + phosphate + H(+). Involved in phosphonate degradation. The sequence is that of Phosphonoacetaldehyde hydrolase from Pseudomonas fluorescens (strain SBW25).